A 166-amino-acid polypeptide reads, in one-letter code: Glycine-rich RNA-binding protein GRP1A (166 aa).

In terms of domain architecture, RRM spans 8–86 (YRCFVGGLAW…RSITVNEAQS (79 aa)). The tract at residues 68-166 (GMNGQDLDGR…YGGSGGGGGW (99 aa)) is disordered. Gly residues-rich tracts occupy residues 88–146 (GSGG…YGGG) and 153–166 (EGGGYGGSGGGGGW).

Predominantly expressed in meristematic and growing tissue.

It is found in the nucleus. Its function is as follows. May play a general role in circadian phenomena associated with meristematic tissue. The sequence is that of Glycine-rich RNA-binding protein GRP1A from Sinapis alba (White mustard).